Reading from the N-terminus, the 105-residue chain is Nitrogen fixation nifHD2 region GlnB-like protein 1 (105 aa).

This sequence belongs to the P(II) protein family.

In terms of biological role, could be involved in the regulation of nitrogen fixation. In Methanosarcina barkeri, this protein is Nitrogen fixation nifHD2 region GlnB-like protein 1.